The primary structure comprises 268 residues: Orotidine 5'-phosphate decarboxylase (268 aa).

Residues D38, 60 to 62 (KTH), 92 to 101 (DRKFADIGNT), Y218, and R236 contribute to the substrate site. The active-site Proton donor is K94.

It belongs to the OMP decarboxylase family.

The catalysed reaction is orotidine 5'-phosphate + H(+) = UMP + CO2. It functions in the pathway pyrimidine metabolism; UMP biosynthesis via de novo pathway; UMP from orotate: step 2/2. The chain is Orotidine 5'-phosphate decarboxylase (URA3) from Candida parapsilosis (Yeast).